A 422-amino-acid polypeptide reads, in one-letter code: Tryptophan synthase beta chain 2 (422 aa).

An N6-(pyridoxal phosphate)lysine modification is found at lysine 111.

It belongs to the TrpB family. Tetramer of two alpha and two beta chains. Pyridoxal 5'-phosphate serves as cofactor.

The enzyme catalyses (1S,2R)-1-C-(indol-3-yl)glycerol 3-phosphate + L-serine = D-glyceraldehyde 3-phosphate + L-tryptophan + H2O. Its pathway is amino-acid biosynthesis; L-tryptophan biosynthesis; L-tryptophan from chorismate: step 5/5. The beta subunit is responsible for the synthesis of L-tryptophan from indole and L-serine. The sequence is that of Tryptophan synthase beta chain 2 (trpB2) from Thermotoga maritima (strain ATCC 43589 / DSM 3109 / JCM 10099 / NBRC 100826 / MSB8).